Reading from the N-terminus, the 199-residue chain is Outer-membrane lipoprotein LolB (199 aa).

A signal peptide spans 1 to 28 (MSACPAPRSPFRWLHAFTLCLLLAVLAG). C29 is lipidated: N-palmitoyl cysteine. A lipid anchor (S-diacylglycerol cysteine) is attached at C29.

It belongs to the LolB family. In terms of assembly, monomer.

It is found in the cell outer membrane. In terms of biological role, plays a critical role in the incorporation of lipoproteins in the outer membrane after they are released by the LolA protein. In Bordetella bronchiseptica (strain ATCC BAA-588 / NCTC 13252 / RB50) (Alcaligenes bronchisepticus), this protein is Outer-membrane lipoprotein LolB.